We begin with the raw amino-acid sequence, 567 residues long: Zinc finger protein 512 (567 aa).

Positions 1 to 34 (MSSRLGAVPATPGPTPFKQQRSTRIVGAKNSRTQ) are disordered. Glycyl lysine isopeptide (Lys-Gly) (interchain with G-Cter in SUMO2) cross-links involve residues K18 and K84. A disordered region spans residues 87-148 (AASHVEGPGG…QTRRIRKEPP (62 aa)). Residues 119 to 130 (KKHKLYGRKQRP) are compositionally biased toward basic residues. The C2H2-type 1 zinc finger occupies 197 to 220 (FTCHHCGKQLRSLAGMKYHVMANH). A Glycyl lysine isopeptide (Lys-Gly) (interchain with G-Cter in SUMO2) cross-link involves residue K227. A C2H2-type 2 zinc finger spans residues 287-310 (LKCHHCGKPYRSKAGLAYHLRSEH). Residue K333 forms a Glycyl lysine isopeptide (Lys-Gly) (interchain with G-Cter in SUMO2) linkage. Residues 406–430 (IQCPNQGCEAVYSSVSGLKAHLGSC) form a C2H2-type 3; atypical zinc finger. A C2H2-type 3 zinc finger spans residues 440 to 463 (YKCLLCQKEFVSESGVKYHINSVH). Positions 485–494 (KQRQQEEEKR) are enriched in basic and acidic residues. The segment at 485–567 (KQRQQEEEKR…PKTNHKRGKK (83 aa)) is disordered. The segment covering 495 to 508 (RQQHRSRRSLRRRQ) has biased composition (basic residues). The span at 523–544 (VGKDQRRNHEELLVATSRKEPE) shows a compositional bias: basic and acidic residues. Basic residues predominate over residues 556 to 567 (RSPKTNHKRGKK).

It belongs to the krueppel C2H2-type zinc-finger protein family.

The protein localises to the nucleus. In terms of biological role, may be involved in transcriptional regulation. The protein is Zinc finger protein 512 (ZNF512) of Bos taurus (Bovine).